Here is a 645-residue protein sequence, read N- to C-terminus: Glucans biosynthesis glucosyltransferase H (645 aa).

The segment at 1-28 (MDGTVTLSPAPTDLPPVSSLDAGQPTLP) is disordered. Helical transmembrane passes span 64 to 84 (LIGGTLTATAVAVWVMLSVLW), 98 to 118 (LFVLLFAWIAMSFASAVAGFI), 423 to 443 (APMWGMLMLVGIGIPLAGAGI), 465 to 485 (AIWIFVCTMFVLLAPKLLGYI), 504 to 524 (ALSILLETVLAALMAPVVMYL), 558 to 578 (SYGGLSVFGLFMGTLAYLVSP), and 580 to 600 (LAAWMAPVIVGMVVSIPVVAV).

Belongs to the glycosyltransferase 2 family. OpgH subfamily.

It is found in the cell inner membrane. It participates in glycan metabolism; osmoregulated periplasmic glucan (OPG) biosynthesis. In terms of biological role, involved in the biosynthesis of osmoregulated periplasmic glucans (OPGs). The protein is Glucans biosynthesis glucosyltransferase H of Xanthomonas campestris pv. campestris (strain 8004).